The following is a 654-amino-acid chain: Pentatricopeptide repeat-containing protein At3g16610 (654 aa).

PPR repeat units lie at residues 1–32, 34–64, 67–101, 102–136, 137–171, 172–203, 204–238, 239–269, 270–304, 307–341, 342–372, 373–407, 408–442, 443–473, 474–508, 509–543, and 546–576; these read MFLS…SLTL, SSTV…IPHP, NPIA…GVRP, TKYT…DFAT, DMYV…DMVA, WNAM…GLSP, NLST…GFSN, DLVV…DFKK, NEVT…DNVA, TPVA…GFIL, DLTV…IGLK, DVIS…GIRP, DITT…GYAV, NTSI…MHKR, DIVS…GVNP, DEVT…DFNV, and RIDH…MPFE. The type E motif; degenerate stretch occupies residues 581–654; the sequence is VLGTLLSACW…KTPGYSWVDV (74 aa).

The protein belongs to the PPR family. PCMP-E subfamily.

This chain is Pentatricopeptide repeat-containing protein At3g16610 (PCMP-E91), found in Arabidopsis thaliana (Mouse-ear cress).